The chain runs to 482 residues: Major cardiolipin synthase ClsA (482 aa).

The next 2 helical transmembrane spans lie at 3-23 (ISSI…IIVI) and 34-54 (WAWL…YLLF). PLD phosphodiesterase domains lie at 217-244 (LNYR…GDEY) and 395-422 (DNGF…DVRS). Active-site residues include His-222, Lys-224, Asp-229, His-400, Lys-402, and Asp-407.

Belongs to the phospholipase D family. Cardiolipin synthase subfamily.

It is found in the cell membrane. It carries out the reaction 2 a 1,2-diacyl-sn-glycero-3-phospho-(1'-sn-glycerol) = a cardiolipin + glycerol. Catalyzes the reversible phosphatidyl group transfer from one phosphatidylglycerol molecule to another to form cardiolipin (CL) (diphosphatidylglycerol) and glycerol. The protein is Major cardiolipin synthase ClsA (clsA) of Bacillus subtilis (strain 168).